The chain runs to 341 residues: Porin-like protein L (341 aa).

The signal sequence occupies residues 1 to 21 (MNKKLIALAVAAASISSVATA).

This sequence belongs to the Gram-negative porin family. In terms of assembly, homotrimer.

It is found in the cell outer membrane. Forms pores that allow passive diffusion of small molecules across the outer membrane. The polypeptide is Porin-like protein L (ompL) (Photobacterium profundum (strain SS9)).